Consider the following 1517-residue polypeptide: Dual oxidase 2 (1517 aa).

An N-terminal signal peptide occupies residues 1-25; the sequence is MLPTSLKTLVLLGALLTGPLGPAGG. Over 26–599 the chain is Extracellular; it reads QDAPSLPREV…YFEGSGAGYG (574 aa). Residues 30–596 are peroxidase-like; mediates peroxidase activity; it reads SLPREVQRYD…VIDYFEGSGA (567 aa). Residues Asn-100, Asn-348, Asn-455, and Asn-537 are each glycosylated (N-linked (GlcNAc...) asparagine). A disulfide bridge connects residues Cys-124 and Cys-1131. The helical transmembrane segment at 600-620 threads the bilayer; that stretch reads VTLLAVCCFPVVSLIIAWVVA. Topologically, residues 621–1010 are cytoplasmic; sequence RFRNRERKML…KRFVENYRRH (390 aa). EF-hand domains follow at residues 819 to 854, 855 to 890, and 899 to 934; these read PQDM…FMKG, SPQD…FIEI, and QLAE…HDSD. Residues Asp-832, Asp-834, Asn-836, Tyr-838, Glu-843, Asp-868, Asp-870, Asn-872, and Glu-879 each contribute to the Ca(2+) site. The interval 960-1214 is interaction with TXNDC11; that stretch reads RVSFLTRTPG…GSYALIQLPS (255 aa). Residues 1011-1031 form a helical membrane-spanning segment; it reads IVCVTIFSAICAGLFADRAYY. Over 1032–1046 the chain is Extracellular; it reads YGFASPPTDIEETTY. The chain crosses the membrane as a helical span at residues 1047–1067; it reads VGIILSRGTAASISFMFSYIL. In terms of domain architecture, Ferric oxidoreductase spans 1053–1235; it reads RGTAASISFM…YVGDKLVSLS (183 aa). At 1068-1100 the chain is on the cytoplasmic side; it reads LTMCRNLITFLRETFLNRYIPFDAAVDFHRWIA. A helical transmembrane segment spans residues 1101 to 1121; that stretch reads MAAVVLAVVHSLGHAVNVYIF. The Extracellular portion of the chain corresponds to 1122–1154; sequence SVSPLSLMTCVFPSVFVNDGSKLPPKYYWWFFE. A helical membrane pass occupies residues 1155–1175; sequence TVPGMTGVLLLLVLAIMYVFA. Residues 1176–1185 lie on the Cytoplasmic side of the membrane; sequence SHHFRRHSFR. The helical transmembrane segment at 1186–1206 threads the bilayer; the sequence is GFWLTHHLYVVLYALIIIHGS. A topological domain (extracellular) is located at residue Tyr-1207. Residues 1208–1228 traverse the membrane as a helical segment; sequence ALIQLPSFHIYFLVPAIIYVG. Topologically, residues 1229–1517 are cytoplasmic; it reads DKLVSLSRKK…AHFVHHYENF (289 aa). In terms of domain architecture, FAD-binding FR-type spans 1236 to 1342; it reads RKKVEISVVK…DGPFGEGHQE (107 aa).

In the N-terminal section; belongs to the peroxidase family. Heterodimer with DUOXA2; disulfide-linked. Interacts with TXNDC11, TPO and CYBA. Post-translationally, N-glycosylated. In terms of tissue distribution, expressed in colon, duodenum, rectum and thyroid.

It is found in the apical cell membrane. It localises to the cell junction. The catalysed reaction is NADH + O2 + H(+) = H2O2 + NAD(+). It catalyses the reaction NADPH + O2 + H(+) = H2O2 + NADP(+). It participates in hormone biosynthesis; thyroid hormone biosynthesis. With respect to regulation, the NADPH oxidase activity is calcium-dependent. Peroxidase activity is inhibited by aminobenzohydrazide. In terms of biological role, generates hydrogen peroxide which is required for the activity of thyroid peroxidase/TPO and lactoperoxidase/LPO. Plays a role in thyroid hormones synthesis and lactoperoxidase-mediated antimicrobial defense at the surface of mucosa. May have its own peroxidase activity through its N-terminal peroxidase-like domain. The polypeptide is Dual oxidase 2 (Duox2) (Rattus norvegicus (Rat)).